We begin with the raw amino-acid sequence, 81 residues long: Dermaseptin-B2 (81 aa).

Positions 1-22 (MAFLKKSLFLVLFLGLVSLSIC) are cleaved as a signal peptide. A propeptide spanning residues 23–43 (EEEKRENEDEEEQEDDEQSEM) is cleaved from the precursor. The disordered stretch occupies residues 24–46 (EEKRENEDEEEQEDDEQSEMKRG). Positions 30–40 (EDEEEQEDDEQ) are enriched in acidic residues. The tract at residues 54 to 55 (VG) is hinge region that separates the two alpha-helices that constitute the peptide. Valine 78 is subject to Valine amide. Residues 80 to 81 (EQ) constitute a propeptide that is removed on maturation.

Post-translationally, amidation permits an increased antimicrobial activity against some microorganisms such as T.album and S.cerevisiae. In terms of processing, may contain a D-amino acid residue, since the natural peptide is not identical in chromatographic properties to the synthetic peptide. In terms of tissue distribution, expressed by the skin glands.

Its subcellular location is the secreted. The protein resides in the target cell membrane. Cationic amphipathic alpha-helical antimicrobial peptide with potent activity against Gram-negative and Gram-positive bacteria, fungi and protozoa. Acts in a synergistic effect in combination with Plasticin-B1 at doses that are not active alone. Acts by disturbing membrane functions. On model membranes, induces a strong perturbation of anionic lipid bilayers, resides at the hydrocarbon core-water interface, parallel to the plane of the membrane, and interacts preferentially with the polar head groups and glycerol backbone region of the anionic phospholipids, as well as the region of the lipid acyl chain near the bilayer surface. Induces a positive curvature of the bilayer and clustering of anionic lipids, consistent with a carpet mechanism, that may lead to the formation of mixed peptide-phospholipid toroidal, transient pores and membrane permeation/disruption once a threshold peptide accumulation is reached. Also enhances binding of agonists to adenosine A1 receptors (ADORA1), adenosine A2a receptors (ADORA2A), alpha-2 adrenergic receptors (ADRA2A) and 5-hydroxytryptamine 1A receptors (HTR1A). In addition, it enhances guanyl nucleotide exchange which may result in the conversion of receptors to a high affinity state complexed with guanyl nucleotide free G-protein. Affects human behavior eliciting profound malaise, followed by listlessness and then euphoria. Does not show cytotoxic activity on CHO cells. Does not act as a chemoattractant. Does not show hemolytic activity. This Phyllomedusa bicolor (Two-colored leaf frog) protein is Dermaseptin-B2 (ADR).